A 346-amino-acid polypeptide reads, in one-letter code: Biotin synthase (346 aa).

The Radical SAM core domain maps to 38–256 (RQVQVSTLLS…IAVARIMMPT (219 aa)). 3 residues coordinate [4Fe-4S] cluster: Cys53, Cys57, and Cys60. Cys97, Cys128, Cys188, and Arg260 together coordinate [2Fe-2S] cluster.

Belongs to the radical SAM superfamily. Biotin synthase family. As to quaternary structure, homodimer. It depends on [4Fe-4S] cluster as a cofactor. [2Fe-2S] cluster is required as a cofactor.

The catalysed reaction is (4R,5S)-dethiobiotin + (sulfur carrier)-SH + 2 reduced [2Fe-2S]-[ferredoxin] + 2 S-adenosyl-L-methionine = (sulfur carrier)-H + biotin + 2 5'-deoxyadenosine + 2 L-methionine + 2 oxidized [2Fe-2S]-[ferredoxin]. It participates in cofactor biosynthesis; biotin biosynthesis; biotin from 7,8-diaminononanoate: step 2/2. Its function is as follows. Catalyzes the conversion of dethiobiotin (DTB) to biotin by the insertion of a sulfur atom into dethiobiotin via a radical-based mechanism. This Shigella flexneri serotype 5b (strain 8401) protein is Biotin synthase.